The following is a 106-amino-acid chain: Gas vesicle protein J (106 aa).

Belongs to the gas vesicle GvpA family.

The protein localises to the gas vesicle. A minor component of the gas vesicle, might be involved in nucleating gas vesicle formation. Gas vesicles are hollow, gas filled proteinaceous nanostructures found in some microorganisms. It is not clear what function gas vesicles perform in soil bacteria. The protein is Gas vesicle protein J of Streptomyces sp. (strain CB03234).